A 425-amino-acid chain; its full sequence is Type I restriction enzyme MjaVII specificity subunit (425 aa).

The tract at residues 9-168 (KKTEIGEIPE…KSFKIPLPPL (160 aa)) is target recognition domain 1. The segment at 169–208 (EEQKQIAKILTKIDEGIEIIEKSINKLERIKKGLMHKLLT) is central conserved region (CCR). The stretch at 169–208 (EEQKQIAKILTKIDEGIEIIEKSINKLERIKKGLMHKLLT) forms a coiled coil. The segment at 209 to 368 (KGIGHSRFKK…TFKELSKSML (160 aa)) is target recognition domain 2. Residues 369–418 (ENFKIPLPPLEEQKQIAKILSSVDKSIELKKQKKEKLQRMKKKIMELLLT) are a coiled coil. The distal conserved region (DCR) stretch occupies residues 369–418 (ENFKIPLPPLEEQKQIAKILSSVDKSIELKKQKKEKLQRMKKKIMELLLT).

This sequence belongs to the type-I restriction system S methylase family. As to quaternary structure, the type I restriction/modification system is composed of three polypeptides R, M and S.

Functionally, the specificity (S) subunit of a type I restriction enzyme; this subunit dictates DNA sequence specificity. The M and S subunits together form a methyltransferase (MTase) that methylates A-3 on the top and bottom strands of the sequence 5'-CAAN(7)TGG-3'. In the presence of the R subunit the complex can also act as an endonuclease, binding to the same target sequence but cutting the DNA some distance from this site. Whether the DNA is cut or modified depends on the methylation state of the target sequence. When the target site is unmodified, the DNA is cut. When the target site is hemimethylated, the complex acts as a maintenance MTase modifying the DNA so that both strands become methylated. After locating a non-methylated recognition site, the enzyme complex serves as a molecular motor that translocates DNA in an ATP-dependent manner until a collision occurs that triggers cleavage. The protein is Type I restriction enzyme MjaVII specificity subunit of Methanocaldococcus jannaschii (strain ATCC 43067 / DSM 2661 / JAL-1 / JCM 10045 / NBRC 100440) (Methanococcus jannaschii).